We begin with the raw amino-acid sequence, 615 residues long: Protein ENHANCED DISEASE RESISTANCE 4 (615 aa).

3 disordered regions span residues Ile46–Glu271, Tyr292–Gly336, and Thr549–Pro592. 2 stretches are compositionally biased toward polar residues: residues Asn63–Gly89 and Gly119–Glu129. A coiled-coil region spans residues Met104–Glu129. The span at Asp134–Ser148 shows a compositional bias: basic and acidic residues. Over residues Gly159–Ser168 the composition is skewed to low complexity. Polar residues-rich tracts occupy residues Gly296–Tyr314 and Ile552–Ser564. Over residues Pro565–Arg577 the composition is skewed to basic and acidic residues.

Interacts with RLK902. Binds and recruits EDR1 at the powdery mildew (e.g. G.cichoracearum) penetration site on the plasma membrane. Interacts with CHC2. As to expression, expressed in stems and rosette leaves, and weakly in inflorescences. Not detected in roots.

The protein localises to the cell membrane. It localises to the endosome. Its function is as follows. Plays a negative role in salicylic acid (SA)-mediated resistance to powdery mildew (e.g. Golovinomyces cichoracearum). May modulate plant immunity by regulating the relocation of EDR1 by interacting with CHC2 and modulating endocytosis. The chain is Protein ENHANCED DISEASE RESISTANCE 4 from Arabidopsis thaliana (Mouse-ear cress).